Reading from the N-terminus, the 390-residue chain is Methylthioribose-1-phosphate isomerase (390 aa).

The active-site Proton donor is the aspartate 263.

Belongs to the eIF-2B alpha/beta/delta subunits family. MtnA subfamily.

Its subcellular location is the cytoplasm. The protein resides in the nucleus. The catalysed reaction is 5-(methylsulfanyl)-alpha-D-ribose 1-phosphate = 5-(methylsulfanyl)-D-ribulose 1-phosphate. It participates in amino-acid biosynthesis; L-methionine biosynthesis via salvage pathway; L-methionine from S-methyl-5-thio-alpha-D-ribose 1-phosphate: step 1/6. In terms of biological role, catalyzes the interconversion of methylthioribose-1-phosphate (MTR-1-P) into methylthioribulose-1-phosphate (MTRu-1-P). In Meyerozyma guilliermondii (strain ATCC 6260 / CBS 566 / DSM 6381 / JCM 1539 / NBRC 10279 / NRRL Y-324) (Yeast), this protein is Methylthioribose-1-phosphate isomerase.